Reading from the N-terminus, the 165-residue chain is E3 ubiquitin-protein ligase RNF181 (165 aa).

An RING-type; atypical zinc finger spans residues 88–129 (CPVCLLEFEEEETVIEMPCHHLFHSNCILPWLSKTNSCPLCR). The tract at residues 136-165 (DDSYEEHKKDKARRQQQQHRLENLHGAMYT) is disordered. Threonine 165 is subject to Phosphothreonine.

It belongs to the RNF181 family. As to quaternary structure, directly interacts with ITGA2B and, as a result, with integrin ITGA2B/ITGB3. There is no evidence that integrin ITGA2B/ITGB3 is an endogenous substrate for RNF181-directed ubiquitination. Post-translationally, auto-ubiquitinated as part of the enzymatic reaction.

The catalysed reaction is S-ubiquitinyl-[E2 ubiquitin-conjugating enzyme]-L-cysteine + [acceptor protein]-L-lysine = [E2 ubiquitin-conjugating enzyme]-L-cysteine + N(6)-ubiquitinyl-[acceptor protein]-L-lysine.. It participates in protein modification; protein ubiquitination. E3 ubiquitin-protein ligase which accepts ubiquitin from an E2 ubiquitin-conjugating enzyme in the form of a thioester and then directly transfers the ubiquitin to targeted substrates. Catalyzes monoubiquitination of 26S proteasome subunit PSMC2/RPT1. The protein is E3 ubiquitin-protein ligase RNF181 (Rnf181) of Rattus norvegicus (Rat).